Reading from the N-terminus, the 267-residue chain is Strigolactone esterase D14 (267 aa).

The Nucleophile role is filled by serine 97. Residues aspartate 218 and histidine 247 contribute to the active site.

It belongs to the AB hydrolase superfamily. Interacts with SMXL6, SMXL7 and SMXL8. The interaction with SMXLs occurs in the presence of (2'R) stereoisomers of strigolactones, but not (2'S) stereoisomers. Interacts with MAX2. Forms a complex with MAX2 and SKP1A/ASK1 in presence of strigolactone. In terms of tissue distribution, expressed at high levels in rosette and cauline leaves and at lower levels in axillary buds, inflorescences, stems, roots and developing vascular tissue of cotyledons.

The protein resides in the cytoplasm. It is found in the nucleus. Involved in strigolactone signaling pathway. Does not move long distances acropetally in the plant to regulate shoot branching and is rapidly degraded in the presence of strigolactones. Functions downstream of strigolactone synthesis, as a component of hormone signaling and as an enzyme that participates in the conversion of strigolactones to the bioactive form. Acts probably as a strigolactone receptor. Strigolactones are hormones that inhibit tillering and shoot branching through the MAX-dependent pathway, contribute to the regulation of shoot architectural response to phosphate-limiting conditions and function as rhizosphere signal that stimulates hyphal branching of arbuscular mycorrhizal fungi and trigger seed germination of root parasitic weeds. Hydrolyzes methyl carlactonoate (MeCLA), but not carlactone (CL) or carlactonoic acid (CLA). Hydrolyzes the butenolide ring of strigolactones. The initial nucleophilic attack causes an electron shift, followed by the addition of a water molecule, to lead to the release of the ABC ring product and the formation of a 'Ser-97'-stabilized open lactone intermediate. Has no esterase activity for 4-nitrophenyl butyrate. Binds and hydrolyzes the synthetic strigolactone analog GR24 in vitro. Forms a stable covalent complex with the D-ring of strigolactone, which is essential for hormone bioactivity. The D-ring is attached to His-247 of the catalytic triad. The hydrolysis of strigolactone into a covalently linked intermediate molecule initiates a conformational change of D14 to facilitate interaction with MAX2 and formation of the D14-MAX2-SKP1/ASK1 complex to trigger strigolactone signaling. This mechanism defines D14 as a non-canonical hormone receptor with dual functions to generate and sense the active form of strigolactone. The polypeptide is Strigolactone esterase D14 (Arabidopsis thaliana (Mouse-ear cress)).